Reading from the N-terminus, the 234-residue chain is Zinc finger FYVE domain-containing protein 21 (234 aa).

An FYVE-type zinc finger spans residues 44–104; sequence DKECPRCMQC…QCADCALVSH (61 aa). Residues Cys50, Cys53, Cys66, Cys69, Cys74, Cys77, Cys96, and Cys99 each contribute to the Zn(2+) site. Residues 107–234 are PH-like; it reads AEFYDKQLKV…TKLLYESRDQ (128 aa).

In terms of assembly, interacts with PTK2/FAK1. Widely expressed.

The protein resides in the cell junction. It is found in the focal adhesion. The protein localises to the cytoplasmic vesicle. It localises to the endosome. Functionally, plays a role in cell adhesion, and thereby in cell motility which requires repeated formation and disassembly of focal adhesions. Regulates microtubule-induced PTK2/FAK1 dephosphorylation, an event important for focal adhesion disassembly, as well as integrin beta-1/ITGB1 cell surface expression. In Mus musculus (Mouse), this protein is Zinc finger FYVE domain-containing protein 21 (Zfyve21).